A 446-amino-acid polypeptide reads, in one-letter code: Dual specificity mitogen-activated protein kinase kinase 2 (446 aa).

The segment covering 27–42 (SSGSSAGLGFQGQSQQ) has biased composition (low complexity). Residues 27–51 (SSGSSAGLGFQGQSQQHSTVNSMQG) are disordered. The Protein kinase domain maps to 149-414 (LKDLGEIGRG…YKELLKHPFI (266 aa)). Residues 155-163 (IGRGAYGSV) and K178 contribute to the ATP site. The Proton acceptor role is filled by D276. At S304 the chain carries Phosphoserine; by RAF. Residue T308 is modified to Phosphothreonine; by RAF.

Belongs to the protein kinase superfamily. STE Ser/Thr protein kinase family. MAP kinase kinase subfamily. Post-translationally, MAPKK is itself dependent on Ser/Thr phosphorylation for activity catalyzed by MAP kinase kinase kinases. Expressed abundantly in the adult brain and muscle.

The enzyme catalyses L-seryl-[protein] + ATP = O-phospho-L-seryl-[protein] + ADP + H(+). The catalysed reaction is L-threonyl-[protein] + ATP = O-phospho-L-threonyl-[protein] + ADP + H(+). It catalyses the reaction L-tyrosyl-[protein] + ATP = O-phospho-L-tyrosyl-[protein] + ADP + H(+). Catalyzes the concomitant phosphorylation of a threonine and a tyrosine residue in a Thr-Glu-Tyr sequence located in MAP kinases. This is Dual specificity mitogen-activated protein kinase kinase 2 (map2k2) from Xenopus laevis (African clawed frog).